The primary structure comprises 143 residues: MIYGVGTDIIQIDRVRGVMERTRGRFVEKILGPREMKIYLARKARSEKRGLAFLCTRFAAKEAFSKAIGLGMRWPMTWRAMELLNQPSGEPAPHCTGELAEWVRERGLTVRVSVSDEHEYAVAFAIAERGGQLAAPQSEPASN.

Positions 8 and 62 each coordinate Mg(2+).

The protein belongs to the P-Pant transferase superfamily. AcpS family. Mg(2+) serves as cofactor.

Its subcellular location is the cytoplasm. The catalysed reaction is apo-[ACP] + CoA = holo-[ACP] + adenosine 3',5'-bisphosphate + H(+). Its function is as follows. Transfers the 4'-phosphopantetheine moiety from coenzyme A to a Ser of acyl-carrier-protein. The polypeptide is Holo-[acyl-carrier-protein] synthase (Cupriavidus metallidurans (strain ATCC 43123 / DSM 2839 / NBRC 102507 / CH34) (Ralstonia metallidurans)).